Reading from the N-terminus, the 496-residue chain is Autophagy-related protein 21 (496 aa).

A disordered region spans residues 41-86; sequence SKKKTSNNNGSASNSESRNNEESILITNGSRDRTDAEEEEDNEDNA. Over residues 46 to 57 the composition is skewed to low complexity; it reads SNNNGSASNSES. Over residues 75 to 84 the composition is skewed to acidic residues; that stretch reads DAEEEEDNED. The residue at position 213 (Thr213) is a Phosphothreonine. A Phosphoserine modification is found at Ser237. 3 WD repeats span residues 294–334, 346–385, and 448–488; these read VHKG…DYMS, TRLC…NSLP, and VNES…GECV. Residues 342 to 346 carry the L/FRRG motif motif; sequence FRRGT.

This sequence belongs to the WD repeat PROPPIN family.

Its subcellular location is the cytoplasm. It is found in the vacuole. Required for cytoplasm to vacuole transport (Cvt) vesicles formation and mitophagy. Involved in binding of phosphatidylethanolamine to ATG8 and in recruitment of ATG8 and ATG5 to the pre-autophagosomal structure. Protects ATG8 from ARG4-mediated cleavage. Essential for maturation of proaminopeptidase I. The sequence is that of Autophagy-related protein 21 (ATG21) from Saccharomyces cerevisiae (strain ATCC 204508 / S288c) (Baker's yeast).